A 131-amino-acid polypeptide reads, in one-letter code: Fatty acid-binding protein (131 aa).

Residues Arg-106 and Arg-126 to Tyr-128 contribute to the (5Z,8Z,11Z,14Z)-eicosatetraenoate site. (9Z)-octadecenoate is bound by residues Arg-106 and Arg-126–Tyr-128.

Belongs to the calycin superfamily. Fatty-acid binding protein (FABP) family.

Its subcellular location is the cytoplasm. In terms of biological role, FABPs are thought to play a role in the intracellular transport of long-chain fatty acids and their acyl-CoA esters. This Lepidoglyphus destructor (Storage mite) protein is Fatty acid-binding protein.